A 274-amino-acid polypeptide reads, in one-letter code: Protein YehF (274 aa).

The WGR domain maps to 2–78; sequence RHFIYQDEKS…KDNSLQPSQT (77 aa).

Its function is as follows. Has been implicated in selenate reduction; a mini-Tn10 insertion mutant in 'molR', (which was mapped to 47.3 centisomes i.e. this locus), is defective in the reduction of selenate. This Escherichia coli (strain K12) protein is Protein YehF (yehF).